The sequence spans 173 residues: Large ribosomal subunit protein uL5 (173 aa).

The protein belongs to the universal ribosomal protein uL5 family. In terms of assembly, part of the 50S ribosomal subunit; contacts the 5S rRNA and probably tRNA. Forms a bridge to the 30S subunit in the 70S ribosome.

Its function is as follows. This is one of the proteins that bind and probably mediate the attachment of the 5S RNA into the large ribosomal subunit, where it forms part of the central protuberance. In the 70S ribosome it contacts protein S13 of the 30S subunit (bridge B1b), connecting the 2 subunits; this bridge is implicated in subunit movement. May contact the P site tRNA; the 5S rRNA and some of its associated proteins might help stabilize positioning of ribosome-bound tRNAs. The protein is Large ribosomal subunit protein uL5 of Nitrosopumilus maritimus (strain SCM1).